A 636-amino-acid polypeptide reads, in one-letter code: Interleukin-27 receptor subunit alpha (636 aa).

The first 32 residues, 1-32 (MRGGRGAPFWLWPLPKLALLPLLWVLFQRTRP), serve as a signal peptide directing secretion. The Extracellular segment spans residues 33 to 516 (QGSAGPLQCY…HLPDNTLRWK (484 aa)). N-linked (GlcNAc...) asparagine glycosylation is found at asparagine 51 and asparagine 76. Positions 131 to 231 (PRLGPDVDFS…PILSFQTPPS (101 aa)) constitute a Fibronectin type-III 1 domain. The short motif at 217-221 (WGEWS) is the WSXWS motif element. N-linked (GlcNAc...) asparagine glycans are attached at residues asparagine 302, asparagine 311, asparagine 374, asparagine 382, and asparagine 467. Fibronectin type-III domains follow at residues 322 to 417 (APRS…LAPL) and 419 to 511 (GPTL…LPDN). A helical membrane pass occupies residues 517–537 (VLPGILFLWGLFLLGCGLSLA). Residues 538-636 (TSGRCYHLRH…LGPPRPQVLA (99 aa)) lie on the Cytoplasmic side of the membrane. The Box 1 motif signature appears at 554–562 (VWEKVPDPA). Residues 587-636 (EVEEMEPPPVMESSQPAQATAPLDSGYEKHFLPTPEELGLLGPPRPQVLA) form a disordered region. Residues 618–628 (LPTPEELGLLG) are compositionally biased toward low complexity.

This sequence belongs to the type I cytokine receptor family. Type 2 subfamily. In terms of assembly, component of a receptor complex composed of IL6ST/GP130, IL27RA/WSX1 and CNTFR which interacts with the neuroprotective peptide humanin. As to expression, highly expressed in lymphoid tissues such as spleen, lymph nodes and peripheral blood leukocytes. Weakly expressed in other tissues examined including heart, brain, fetal and adult lung, liver, skeletal muscle, kidney, pancreas, prostate, testis, ovary, small intestine, kidney and colon. In the lymphoid system, higher level expression in CD4+ T-cell subsets than in CD8+ T-cell subsets. Also weaker expression in CD19+ B-cells and monocytes.

The protein resides in the membrane. Receptor for IL27. Requires IL6ST/GP130 to mediate signal transduction in response to IL27. This signaling system acts through STAT3 and STAT1. Acts as a receptor for the neuroprotective peptide humanin as part of a complex with IL6ST/GP130 and CNTFR. Involved in the regulation of Th1-type immune responses. Also appears to be involved in innate defense mechanisms. The polypeptide is Interleukin-27 receptor subunit alpha (IL27RA) (Homo sapiens (Human)).